A 398-amino-acid polypeptide reads, in one-letter code: MRKRTEPVALEHERRTASGSPSAGPAAAALDADCRLKQNLCLAGPGPAEPRCAADAGMKRALGRRKGLCFRLRKILFFVLGLYVAIPFLIKLCPGIQAKLIFLNFVRVPYFIDLKRPQDQGLNHTCNYYLQPEEDVTIGVWHTVPTVWWKNAQGKDQMWYEDALSSSHPIILYLHGNAGTRGGDHRVELYKVLSSLGYHVVTFDYRGWGDSVGTPSERGMTYDALHVFDWIKVRSGDNPVYIWGHSLGTGVATNLVRRLCERETPPDALILESPFTNIREEAKSHPFSVIYRYFPGFDWFFLDPITSSGIQFANDENVKHISCSLLILHAEDDPVVPFQLGRKLYNIAAPSRSFRDFKVQFIPFHSDLGYRHKYIYKSPELPRILREFLGKSEPGRQH.

A compositionally biased stretch (basic and acidic residues) spans 1 to 16; sequence MRKRTEPVALEHERRT. Positions 1–24 are disordered; it reads MRKRTEPVALEHERRTASGSPSAG. The Cytoplasmic segment spans residues 1–74; sequence MRKRTEPVAL…RKGLCFRLRK (74 aa). A helical membrane pass occupies residues 75 to 95; that stretch reads ILFFVLGLYVAIPFLIKLCPG. Over 96–398 the chain is Extracellular; sequence IQAKLIFLNF…LGKSEPGRQH (303 aa). N-linked (GlcNAc...) asparagine glycosylation occurs at asparagine 123. The active-site Nucleophile is serine 246. Catalysis depends on charge relay system residues aspartate 333 and histidine 372.

Belongs to the serine esterase family.

The protein localises to the endoplasmic reticulum membrane. It catalyses the reaction 1-(9Z-octadecenoyl)-sn-glycero-3-phospho-L-serine + H2O = sn-glycero-3-phospho-L-serine + (9Z)-octadecenoate + H(+). The enzyme catalyses 1-(9Z-octadecenoyl)-sn-glycero-3-phospho-(1'-sn-glycerol) + H2O = sn-glycero-3-phospho-(1'-sn-glycerol) + (9Z)-octadecenoate + H(+). It carries out the reaction 1-(9Z-octadecenoyl)-sn-glycero-3-phospho-(1D-myo-inositol) + H2O = sn-glycero-3-phospho-1D-myo-inositol + (9Z)-octadecenoate + H(+). The catalysed reaction is 1-(9Z-octadecenoyl)-sn-glycero-3-phosphoethanolamine + H2O = sn-glycero-3-phosphoethanolamine + (9Z)-octadecenoate + H(+). It catalyses the reaction 1-(9Z-octadecenoyl)-sn-glycero-3-phosphocholine + H2O = 1-(9Z-octadecenoyl)-sn-glycerol + phosphocholine + H(+). The enzyme catalyses 2-(9Z-octadecenoyl)-glycerol + H2O = glycerol + (9Z)-octadecenoate + H(+). It carries out the reaction 1-hexadecanoyl-sn-glycero-3-phospho-L-serine + H2O = sn-glycero-3-phospho-L-serine + hexadecanoate + H(+). The catalysed reaction is 2-(5Z,8Z,11Z,14Z-eicosatetraenoyl)-glycerol + H2O = glycerol + (5Z,8Z,11Z,14Z)-eicosatetraenoate + H(+). It catalyses the reaction Hydrolyzes glycerol monoesters of long-chain fatty acids.. The enzyme catalyses 1-decanoylglycerol + H2O = decanoate + glycerol + H(+). It carries out the reaction 1-dodecanoylglycerol + H2O = dodecanoate + glycerol + H(+). The catalysed reaction is 1-tetradecanoylglycerol + H2O = tetradecanoate + glycerol + H(+). It catalyses the reaction 2-hexadecanoylglycerol + H2O = glycerol + hexadecanoate + H(+). The enzyme catalyses 1-(9Z-octadecenoyl)-glycerol + H2O = glycerol + (9Z)-octadecenoate + H(+). It carries out the reaction 2-(9Z,12Z-octadecadienoyl)-glycerol + H2O = (9Z,12Z)-octadecadienoate + glycerol + H(+). The catalysed reaction is 1-(5Z,8Z,11Z,14Z-eicosatetraenoyl)-glycerol + H2O = glycerol + (5Z,8Z,11Z,14Z)-eicosatetraenoate + H(+). It catalyses the reaction 1-(9Z,12Z-octadecadienoyl)-glycerol + H2O = (9Z,12Z)-octadecadienoate + glycerol + H(+). The enzyme catalyses 1-hexadecanoylglycerol + H2O = glycerol + hexadecanoate + H(+). It carries out the reaction 1-octadecanoylglycerol + H2O = octadecanoate + glycerol + H(+). The catalysed reaction is 1-octadecanoyl-2-(9,10-epoxyoctadecanoyl)-sn-glycero-3-phospho-L-serine + H2O = 9,10-epoxyoctadecanoate + 1-octadecanoyl-sn-glycero-3-phosphoserine + H(+). It catalyses the reaction 1-octadecanoyl-2-(10-hydroxyoctadecanoyl)-sn-glycero-3-phospho-L-serine + H2O = 1-octadecanoyl-sn-glycero-3-phosphoserine + 10-hydroxyoctadecanoate + H(+). The enzyme catalyses 1-hexadecanoyl-2-(10-hydroxyoctadecanoyl)-sn-glycero-3-phospho-L-serine + H2O = 10-hydroxyoctadecanoate + 1-hexadecanoyl-sn-glycero-3-phospho-L-serine + H(+). Its function is as follows. Lysophosphatidylserine (LPS) lipase that mediates the hydrolysis of lysophosphatidylserine, a class of signaling lipids that regulates immunological and neurological processes. Represents a major lysophosphatidylserine lipase in the brain, thereby playing a key role in the central nervous system. Also able to hydrolyze oxidized phosphatidylserine; oxidized phosphatidylserine is produced in response to severe inflammatory stress and constitutes a proapoptotic 'eat me' signal. Also has monoacylglycerol (MAG) lipase activity: hydrolyzes 2-arachidonoylglycerol (2-AG), thereby acting as a regulator of endocannabinoid signaling pathways. Has a strong preference for very-long-chain lipid substrates; substrate specificity is likely due to improved catalysis and not improved substrate binding. The protein is Lysophosphatidylserine lipase ABHD12 of Bos taurus (Bovine).